Consider the following 181-residue polypeptide: Adenylate kinase (181 aa).

10 to 15 (GAGKGT) provides a ligand contact to ATP. An NMP region spans residues 30–59 (STGELFRRNIEKDTKLGHEAKKYLDAGDLV). AMP-binding positions include T31, R36, 57-59 (DLV), 85-88 (GYPR), and Q92. Residues 126-132 (GRGRADD) form an LID region. Residue R127 coordinates ATP. AMP is bound by residues R129 and R140. An ATP-binding site is contributed by G166.

Belongs to the adenylate kinase family. Monomer.

Its subcellular location is the cytoplasm. The catalysed reaction is AMP + ATP = 2 ADP. It functions in the pathway purine metabolism; AMP biosynthesis via salvage pathway; AMP from ADP: step 1/1. Functionally, catalyzes the reversible transfer of the terminal phosphate group between ATP and AMP. Plays an important role in cellular energy homeostasis and in adenine nucleotide metabolism. The polypeptide is Adenylate kinase (Mycobacterium leprae (strain Br4923)).